We begin with the raw amino-acid sequence, 969 residues long: Alanine--tRNA ligase (969 aa).

The N-terminal 8 residues, 1-8 (MIKTLLRR), are a transit peptide targeting the mitochondrion. The Zn(2+) site is built by H616, H620, C735, and H739.

The protein belongs to the class-II aminoacyl-tRNA synthetase family. Monomer. It depends on Zn(2+) as a cofactor.

It localises to the mitochondrion. Its subcellular location is the cytoplasm. It carries out the reaction tRNA(Ala) + L-alanine + ATP = L-alanyl-tRNA(Ala) + AMP + diphosphate. Functionally, catalyzes the attachment of alanine to tRNA(Ala) in a two-step reaction: alanine is first activated by ATP to form Ala-AMP and then transferred to the acceptor end of tRNA(Ala). Also edits incorrectly charged tRNA(Ala) via its editing domain. This is Alanine--tRNA ligase from Candida albicans (strain SC5314 / ATCC MYA-2876) (Yeast).